Consider the following 474-residue polypeptide: tRNA (adenine(58)-N(1))-methyltransferase catalytic subunit trm61 (474 aa).

A disordered region spans residues 75-109 (DTGSRGRTQKMKRKADELDSSTQAEDKPSPQTPVA). S-adenosyl-L-methionine-binding positions include 163–165 (SGS), Glu197, Arg202, 225–226 (DV), and Asp250. Disordered regions lie at residues 356–390 (LFRA…VPVY) and 423–474 (DEKR…SQKE). A compositionally biased stretch (polar residues) spans 358 to 367 (RATQNQSDGD). Residues 423–432 (DEKRCREKWP) are compositionally biased toward basic and acidic residues. Residues 434-443 (NRVQEPQGPQ) show a composition bias toward polar residues. The segment covering 450-474 (KRESREKRDLQRKEQSQPETESQKE) has biased composition (basic and acidic residues).

It belongs to the class I-like SAM-binding methyltransferase superfamily. TRM61 family. Heterotetramer; composed of two copies of TRM6 and two copies of TRM61.

Its subcellular location is the nucleus. The catalysed reaction is adenosine(58) in tRNA + S-adenosyl-L-methionine = N(1)-methyladenosine(58) in tRNA + S-adenosyl-L-homocysteine + H(+). Its function is as follows. Catalytic subunit of tRNA (adenine-N(1)-)-methyltransferase, which catalyzes the formation of N(1)-methyladenine at position 58 (m1A58) in initiator methionyl-tRNA. In Aspergillus oryzae (strain ATCC 42149 / RIB 40) (Yellow koji mold), this protein is tRNA (adenine(58)-N(1))-methyltransferase catalytic subunit trm61 (trm61).